A 210-amino-acid polypeptide reads, in one-letter code: Chaperone protein TorD (210 aa).

Belongs to the TorD/DmsD family. TorD subfamily.

Its subcellular location is the cytoplasm. Functionally, involved in the biogenesis of TorA. Acts on TorA before the insertion of the molybdenum cofactor and, as a result, probably favors a conformation of the apoenzyme that is competent for acquiring the cofactor. This Salmonella newport (strain SL254) protein is Chaperone protein TorD.